We begin with the raw amino-acid sequence, 658 residues long: UvrABC system protein B (658 aa).

Positions 25 to 182 (ESLNGGNSHQ…KGLVDIQYSR (158 aa)) constitute a Helicase ATP-binding domain. Position 38-45 (38-45 (GVTGSGKT)) interacts with ATP. Positions 91 to 114 (YYDYYQPEAYIPQTDTYIEKDASI) match the Beta-hairpin motif. Residues 429–595 (QIDDLYSEIN…TVQKKVHDVI (167 aa)) enclose the Helicase C-terminal domain. Residues 622 to 657 (KELIAKLQEEMKQAAKELEFEKAAELRDLIMELKTA) form the UVR domain.

Belongs to the UvrB family. In terms of assembly, forms a heterotetramer with UvrA during the search for lesions. Interacts with UvrC in an incision complex.

Its subcellular location is the cytoplasm. The UvrABC repair system catalyzes the recognition and processing of DNA lesions. A damage recognition complex composed of 2 UvrA and 2 UvrB subunits scans DNA for abnormalities. Upon binding of the UvrA(2)B(2) complex to a putative damaged site, the DNA wraps around one UvrB monomer. DNA wrap is dependent on ATP binding by UvrB and probably causes local melting of the DNA helix, facilitating insertion of UvrB beta-hairpin between the DNA strands. Then UvrB probes one DNA strand for the presence of a lesion. If a lesion is found the UvrA subunits dissociate and the UvrB-DNA preincision complex is formed. This complex is subsequently bound by UvrC and the second UvrB is released. If no lesion is found, the DNA wraps around the other UvrB subunit that will check the other stand for damage. In Natranaerobius thermophilus (strain ATCC BAA-1301 / DSM 18059 / JW/NM-WN-LF), this protein is UvrABC system protein B.